The following is a 363-amino-acid chain: Jasmonate-induced oxygenase 3 (363 aa).

The 103-residue stretch at 210 to 312 folds into the Fe2OG dioxygenase domain; that stretch reads ESGGCLRVNY…RLSLAFFYNP (103 aa). A jasmonate-binding site is contributed by Arg216. Positions 218 and 220 each coordinate 2-oxoglutarate. 3 residues coordinate Fe cation: His235, Asp237, and His293. Residues Arg303 and Ser305 each coordinate 2-oxoglutarate. Jasmonate-binding residues include Arg342 and Arg346.

Belongs to the iron/ascorbate-dependent oxidoreductase family. L-ascorbate serves as cofactor. Requires Fe(2+) as cofactor.

The catalysed reaction is jasmonate + 2-oxoglutarate + O2 = (1R,2R)-12-hydroxyjasmonate + succinate + CO2. In terms of biological role, 2-oxoglutarate-dependent dioxygenase involved in the oxidation of jasmonate (JA), a stress-induced phytohormone synthesized in response to attack by pathogens and herbivores, which triggers the activation of defense responses via the JA-mediated signaling pathway. Converts JA to 12-hydroxyjasmonate (12OH-JA), an inactive form of JA. Is specific to free JA, and cannot oxidize the bioactive form jasmonoyl-L-isoleucine (JA-Ile) or other JA-amino acid conjugates. Prevents over-accumulation of JA and indirectly its bioactive form JA-Ile under stress response. Acts as a negative regulator of JA-mediated defense signaling, by contributing to 12OH-JA accumulation, which represses JA defense responses upon infection by the fungal pathogen Botrytis cinerea. Acts as a negative regulator of JA-mediated defense responses upon infestation by the herbivorous caterpillar Mamestra brassicae. This chain is Jasmonate-induced oxygenase 3, found in Arabidopsis thaliana (Mouse-ear cress).